The following is a 2171-amino-acid chain: DExH-box ATP-dependent RNA helicase DExH12 (2171 aa).

Disordered regions lie at residues 24 to 80 (SLVL…KERD), 218 to 267 (EENE…NEGT), and 383 to 426 (TAKE…ESGW). Composition is skewed to basic and acidic residues over residues 31–40 (NRPRDTHEPT) and 50–80 (IDPRSFGDRVAKGRPQELEDKLKKSKKKERD). The segment covering 218–242 (EENEEDDEESDPDMVEEDDDEEDDE) has biased composition (acidic residues). A compositionally biased stretch (basic and acidic residues) spans 383-423 (TAKEREENLQKSINEEARRLKDETGGDGGRGRRDVADRDSE). One can recognise a Helicase ATP-binding 1 domain in the interval 514 to 697 (DTALFKAENI…FLRVDLKKGL (184 aa)). 527–534 (APTGAGKT) contacts ATP. Residues 639–642 (DEIH) carry the DEIH box motif. Positions 731–941 (LCYQKVLAGA…GTVQNAREAC (211 aa)) constitute a Helicase C-terminal 1 domain. Residues 1006–1308 (TDLGRIASYY…WLGSETVLPV (303 aa)) form the SEC63 1 domain. Positions 1360–1537 (TVLYNTNDNV…WIGASSHGLF (178 aa)) constitute a Helicase ATP-binding 2 domain. 1373 to 1380 (APTGSGKT) lines the ATP pocket. The short motif at 1479–1482 (DELH) is the DELH box element. The Helicase C-terminal 2 domain occupies 1574-1779 (AIVQHAKNKK…GVIENKQDAV (206 aa)). The region spanning 1839–2157 (PLNLGMIASY…LGCDQEYSFS (319 aa)) is the SEC63 2 domain.

It belongs to the DExH box helicase family. As to quaternary structure, interacts with CLO.

It localises to the nucleus. It catalyses the reaction ATP + H2O = ADP + phosphate + H(+). In terms of biological role, RNA helicase that plays an essential role in pre-mRNA splicing as component of the U5 snRNP and U4/U6-U5 tri-snRNP complexes. Involved in spliceosome assembly, activation and disassembly. The sequence is that of DExH-box ATP-dependent RNA helicase DExH12 from Arabidopsis thaliana (Mouse-ear cress).